The sequence spans 1004 residues: Importin subunit beta-5 (1004 aa).

Position 1 is an N-acetylmethionine (M1). Residues 21 to 100 enclose the Importin N-terminal domain; sequence AETQLLQWCD…REVLLKLCLN (80 aa).

It belongs to the importin beta family. In terms of assembly, interacts with NAP1.

It localises to the cytoplasm. The protein localises to the nucleus. Its subcellular location is the nuclear pore complex. Functionally, required for nuclear protein import and mediates docking of import substrate to distinct nucleoporins. Serves a receptor for nuclear localization signals. Mediates the nuclear import of TATA-binding protein (TBP) and of histones H2A and H2B. The chain is Importin subunit beta-5 (KAP114) from Saccharomyces cerevisiae (strain ATCC 204508 / S288c) (Baker's yeast).